The chain runs to 540 residues: Phosphoenolpyruvate carboxykinase (ATP) (540 aa).

Arginine 65 provides a ligand contact to substrate. Lysine 87 bears the N6-acetyllysine mark. Substrate is bound by residues tyrosine 207 and lysine 213. ATP-binding positions include lysine 213, histidine 232, and 248–256 (GLSGTGKTT). Mn(2+) is bound by residues lysine 213 and histidine 232. Aspartate 269 contributes to the Mn(2+) binding site. Residues glutamate 297, arginine 333, 449-450 (RI), and threonine 455 each bind ATP. Residue arginine 333 participates in substrate binding. Lysine 523 is modified (N6-acetyllysine).

It belongs to the phosphoenolpyruvate carboxykinase (ATP) family. Monomer. Mn(2+) serves as cofactor.

It localises to the cytoplasm. The catalysed reaction is oxaloacetate + ATP = phosphoenolpyruvate + ADP + CO2. It participates in carbohydrate biosynthesis; gluconeogenesis. In terms of biological role, involved in the gluconeogenesis. Catalyzes the conversion of oxaloacetate (OAA) to phosphoenolpyruvate (PEP) through direct phosphoryl transfer between the nucleoside triphosphate and OAA. The chain is Phosphoenolpyruvate carboxykinase (ATP) from Escherichia coli O7:K1 (strain IAI39 / ExPEC).